The sequence spans 322 residues: Aspartate carbamoyltransferase catalytic subunit (322 aa).

Carbamoyl phosphate is bound by residues Arg65 and Thr66. Residue Lys93 participates in L-aspartate binding. The carbamoyl phosphate site is built by Arg115, His143, and Gln146. L-aspartate-binding residues include Arg176 and Arg230. Gly271 and Pro272 together coordinate carbamoyl phosphate.

The protein belongs to the aspartate/ornithine carbamoyltransferase superfamily. ATCase family. Heterododecamer (2C3:3R2) of six catalytic PyrB chains organized as two trimers (C3), and six regulatory PyrI chains organized as three dimers (R2).

It carries out the reaction carbamoyl phosphate + L-aspartate = N-carbamoyl-L-aspartate + phosphate + H(+). It functions in the pathway pyrimidine metabolism; UMP biosynthesis via de novo pathway; (S)-dihydroorotate from bicarbonate: step 2/3. Its function is as follows. Catalyzes the condensation of carbamoyl phosphate and aspartate to form carbamoyl aspartate and inorganic phosphate, the committed step in the de novo pyrimidine nucleotide biosynthesis pathway. The chain is Aspartate carbamoyltransferase catalytic subunit from Brucella abortus (strain S19).